We begin with the raw amino-acid sequence, 302 residues long: tRNA-cytidine(32) 2-sulfurtransferase (302 aa).

The PP-loop motif motif lies at Ser-43–Ser-48. [4Fe-4S] cluster contacts are provided by Cys-118, Cys-121, and Cys-209.

This sequence belongs to the TtcA family. As to quaternary structure, homodimer. Requires Mg(2+) as cofactor. [4Fe-4S] cluster is required as a cofactor.

Its subcellular location is the cytoplasm. The enzyme catalyses cytidine(32) in tRNA + S-sulfanyl-L-cysteinyl-[cysteine desulfurase] + AH2 + ATP = 2-thiocytidine(32) in tRNA + L-cysteinyl-[cysteine desulfurase] + A + AMP + diphosphate + H(+). It participates in tRNA modification. In terms of biological role, catalyzes the ATP-dependent 2-thiolation of cytidine in position 32 of tRNA, to form 2-thiocytidine (s(2)C32). The sulfur atoms are provided by the cysteine/cysteine desulfurase (IscS) system. The protein is tRNA-cytidine(32) 2-sulfurtransferase of Polynucleobacter necessarius subsp. necessarius (strain STIR1).